A 62-amino-acid polypeptide reads, in one-letter code: MSSVCDVCGKGPGFGMSVSHSHRRTRRRWNPNIQTVRTVVGGTPKRLNVCASCIKAGKVSRA.

This sequence belongs to the bacterial ribosomal protein bL28 family.

The sequence is that of Large ribosomal subunit protein bL28 from Frankia casuarinae (strain DSM 45818 / CECT 9043 / HFP020203 / CcI3).